The chain runs to 341 residues: MKALSKLKPAEGIWMTDVPEPEVGHNDLLIKIRKTAICGTDVHIYNWDEWSQKTIPVPMVVGHEYVGEVVGIGQEVKGFKIGDRVSGEGHITCGHCRNCRGGRTHLCRNTVGVGVNRPGCFAEYLVIPAFNAFKIPDNISDDLASIFDPFGNAVHTALSFDLVGEDVLVSGAGPIGIMAAAVAKHVGARNVVITDVNEYRLSLARKMGVTRAVNVANESLQDVMNELGMTEGFDVGLEMSGAPPAFRTMLDTMNHGGRIAMLGIPPSDMSIDWNKVIFKGLFIKGIYGREMFETWYKMAALIQSGLDLSPIITHRFTIDDFQKGFDAMRSGQSGKVILSWD.

Position 38 (Cys38) interacts with Zn(2+). Active-site charge relay system residues include Thr40 and His43. Zn(2+) contacts are provided by His63, Glu64, Cys93, Cys96, Cys99, and Cys107. NAD(+) contacts are provided by residues Ile175, Asp195, Arg200, 262 to 264, and 286 to 287; these read LGI and IY.

It belongs to the zinc-containing alcohol dehydrogenase family. As to quaternary structure, homotetramer. Zn(2+) is required as a cofactor.

It is found in the cytoplasm. It catalyses the reaction L-threonine + NAD(+) = (2S)-2-amino-3-oxobutanoate + NADH + H(+). Its pathway is amino-acid degradation; L-threonine degradation via oxydo-reductase pathway; glycine from L-threonine: step 1/2. Its function is as follows. Catalyzes the NAD(+)-dependent oxidation of L-threonine to 2-amino-3-ketobutyrate. This Cronobacter sakazakii (strain ATCC BAA-894) (Enterobacter sakazakii) protein is L-threonine 3-dehydrogenase.